The primary structure comprises 75 residues: Large ribosomal subunit protein bL31 (75 aa).

Residues cysteine 16, cysteine 18, cysteine 37, and cysteine 40 each coordinate Zn(2+).

It belongs to the bacterial ribosomal protein bL31 family. Type A subfamily. As to quaternary structure, part of the 50S ribosomal subunit. Requires Zn(2+) as cofactor.

Functionally, binds the 23S rRNA. The sequence is that of Large ribosomal subunit protein bL31 from Baumannia cicadellinicola subsp. Homalodisca coagulata.